A 294-amino-acid polypeptide reads, in one-letter code: Non-selective voltage-gated ion channel VDAC2 (294 aa).

Residue A2 is modified to N-acetylalanine. Residues K23 and K31 each contribute to the ATP site. An N6-acetyllysine; alternate modification is found at K31. An N6-succinyllysine; alternate modification is found at K31. K31 participates in a covalent cross-link: Glycyl lysine isopeptide (Lys-Gly) (interchain with G-Cter in ubiquitin); alternate. 2 beta stranded membrane passes run 37 to 46 and 50 to 58; these read LVKLDVKTKS and VEFSTSGSS. Residue K64 forms a Glycyl lysine isopeptide (Lys-Gly) (interchain with G-Cter in ubiquitin) linkage. The beta stranded transmembrane segment at 65–75 threads the bilayer; it reads VTGTLETKYKW. Y78 is subject to Phosphotyrosine. Transmembrane regions (beta stranded) follow at residues 80–87, 91–100, and 106–115; these read LTFTEKWN, TLGTEIAIED, and LKLTFDTTFS. At T118 the chain carries Phosphothreonine. K120 bears the N6-acetyllysine; alternate mark. K120 participates in a covalent cross-link: Glycyl lysine isopeptide (Lys-Gly) (interchain with G-Cter in ubiquitin); alternate. K121 is covalently cross-linked (Glycyl lysine isopeptide (Lys-Gly) (interchain with G-Cter in ubiquitin)). 4 consecutive transmembrane segments (beta stranded) span residues 122–131, 134–141, 148–156, and 161–169; these read SGKIKSSYKR, INLGCDVD, AIHGSAVFG, and LAGYQMTFD. K172 participates in a covalent cross-link: Glycyl lysine isopeptide (Lys-Gly) (interchain with G-Cter in ubiquitin). The next 6 beta stranded transmembrane spans lie at 174–186, 189–196, 200–209, 213–222, 229–238, and 242–249; these read KLTR…GYRT, FQLHTNVN, EFGGSIYQKV, LDTSVNLAWT, RFGIAAKYQL, and ASISAKVN. At S251 the chain carries Phosphoserine. Residues 253–255 and 271–275 each bind NAD(+); these read LIG and SALVD. 2 beta stranded membrane-spanning segments follow: residues 253-262 and 265-274; these read LIGVGYTQTL and GVKLTLSALV. At K277 the chain carries N6-acetyllysine; alternate. Residue K277 forms a Glycyl lysine isopeptide (Lys-Gly) (interchain with G-Cter in ubiquitin); alternate linkage. The beta stranded transmembrane segment at 284–293 threads the bilayer; the sequence is HKLGLALELE.

Belongs to the eukaryotic mitochondrial porin family. As to quaternary structure, monomer, homodimer and higher order oligomers; formation of higher order structures is necessary for scramblase activity. Interacts with ARMC12 in a TBC1D21-dependent manner. Interacts with KLC3. Interacts with SPATA33. Interacts with PPP3CC in a SPATA33-dependent manner. Ubiquitinated by PRKN during mitophagy, leading to its degradation and enhancement of mitophagy. Deubiquitinated by USP30.

Its subcellular location is the mitochondrion outer membrane. The protein localises to the membrane. The catalysed reaction is chloride(in) = chloride(out). The enzyme catalyses K(+)(in) = K(+)(out). It catalyses the reaction a 1,2-diacyl-sn-glycero-3-phospho-L-serine(in) = a 1,2-diacyl-sn-glycero-3-phospho-L-serine(out). It carries out the reaction a 1,2-diacyl-sn-glycero-3-phosphocholine(in) = a 1,2-diacyl-sn-glycero-3-phosphocholine(out). The catalysed reaction is a 1,2-diacyl-sn-glycero-3-phospho-(1D-myo-inositol)(in) = a 1,2-diacyl-sn-glycero-3-phospho-(1D-myo-inositol)(out). Non-selective voltage-gated ion channel that mediates the transport of anions and cations through the mitochondrion outer membrane and plasma membrane. The channel adopts an open conformation at zero mV and a closed conformation at both positive and negative potentials. There are two populations of channels; the main that functions in a lower open-state conductance with lower ion selectivity, that switch, in a voltage-dependent manner, from the open to a low-conducting 'closed' state and the other that has a normal ion selectivity in the typical high conductance, 'open' state. Binds various lipids, including the sphingolipid ceramide, the phospholipid phosphatidylcholine, and the sterols cholesterol and oxysterol. Binding of ceramide promotes the mitochondrial outer membrane permeabilization (MOMP) apoptotic pathway. Its function is as follows. Catalyzes the scrambling of phospholipids across the outer mitochondrial membrane; the mechanism is unrelated to channel activity and is capable of translocating both anionic and zwitterionic phospholipids. This is Non-selective voltage-gated ion channel VDAC2 from Oryctolagus cuniculus (Rabbit).